The chain runs to 334 residues: Small ribosomal subunit protein uS2 (334 aa).

This sequence belongs to the universal ribosomal protein uS2 family.

This Xanthobacter autotrophicus (strain ATCC BAA-1158 / Py2) protein is Small ribosomal subunit protein uS2.